A 245-amino-acid chain; its full sequence is MSQLFYNNETISRIIKSQFDMALSHYGDIKYAYMVLNKKKPTEILIISNHHDEWREIYQANNYQHIDPVVIAALNKITPFPWDEDLLVSTQLKMSKIFNLSREHNITNGYTFVLHDHSNNLVMLSIMIDESNVSNIDDVIESNKDKLQMTLMTIHAETISLYREMIRNKEDERSNDKDIFSQRENEILYWASMGKTYQEIALILDIKTGTVKFHIGNVVKKLGVLNAKHAIRLGIELQLIRPVQS.

An HTH luxR-type domain is found at 173–238; sequence RSNDKDIFSQ…HAIRLGIELQ (66 aa). A DNA-binding region (H-T-H motif) is located at residues 197 to 216; it reads YQEIALILDIKTGTVKFHIG.

The protein belongs to the autoinducer-regulated transcriptional regulatory protein family.

Functions as an OHLL responsive transcriptional regulator that acts in virulence (soft rot disease) through the activation of genes for plant tissue macerating enzymes. The polypeptide is Transcriptional activator protein ExpR (expR) (Pectobacterium parmentieri).